The sequence spans 335 residues: Nucleoid-associated protein Ent638_2782 (335 aa).

It belongs to the YejK family.

It is found in the cytoplasm. The protein localises to the nucleoid. In Enterobacter sp. (strain 638), this protein is Nucleoid-associated protein Ent638_2782.